The primary structure comprises 234 residues: Transcriptional activator protein TraR (234 aa).

An HTH luxR-type domain is found at 167 to 232 (TAEDAAWLDP…HLTALAIKRK (66 aa)). The segment at residues 191–210 (MEEIADVEEVKYNSVRVKLR) is a DNA-binding region (H-T-H motif).

This sequence belongs to the autoinducer-regulated transcriptional regulatory protein family.

Positive regulation of conjugal transfer of Ti plasmids. The protein is Transcriptional activator protein TraR (traR) of Agrobacterium vitis (Rhizobium vitis).